Consider the following 280-residue polypeptide: 4-hydroxy-3-methylbut-2-enyl diphosphate reductase (280 aa).

Cys-12 serves as a coordination point for [4Fe-4S] cluster. (2E)-4-hydroxy-3-methylbut-2-enyl diphosphate contacts are provided by His-40 and His-72. Dimethylallyl diphosphate is bound by residues His-40 and His-72. The isopentenyl diphosphate site is built by His-40 and His-72. A [4Fe-4S] cluster-binding site is contributed by Cys-94. Residue His-122 coordinates (2E)-4-hydroxy-3-methylbut-2-enyl diphosphate. Residue His-122 coordinates dimethylallyl diphosphate. His-122 contacts isopentenyl diphosphate. Glu-124 serves as the catalytic Proton donor. (2E)-4-hydroxy-3-methylbut-2-enyl diphosphate is bound at residue Thr-160. Cys-188 is a binding site for [4Fe-4S] cluster. (2E)-4-hydroxy-3-methylbut-2-enyl diphosphate contacts are provided by Ser-216, Asn-218, and Ser-260. Dimethylallyl diphosphate is bound by residues Ser-216, Asn-218, and Ser-260. 3 residues coordinate isopentenyl diphosphate: Ser-216, Asn-218, and Ser-260.

This sequence belongs to the IspH family. It depends on [4Fe-4S] cluster as a cofactor.

The enzyme catalyses isopentenyl diphosphate + 2 oxidized [2Fe-2S]-[ferredoxin] + H2O = (2E)-4-hydroxy-3-methylbut-2-enyl diphosphate + 2 reduced [2Fe-2S]-[ferredoxin] + 2 H(+). It catalyses the reaction dimethylallyl diphosphate + 2 oxidized [2Fe-2S]-[ferredoxin] + H2O = (2E)-4-hydroxy-3-methylbut-2-enyl diphosphate + 2 reduced [2Fe-2S]-[ferredoxin] + 2 H(+). Its pathway is isoprenoid biosynthesis; dimethylallyl diphosphate biosynthesis; dimethylallyl diphosphate from (2E)-4-hydroxy-3-methylbutenyl diphosphate: step 1/1. It participates in isoprenoid biosynthesis; isopentenyl diphosphate biosynthesis via DXP pathway; isopentenyl diphosphate from 1-deoxy-D-xylulose 5-phosphate: step 6/6. Functionally, catalyzes the conversion of 1-hydroxy-2-methyl-2-(E)-butenyl 4-diphosphate (HMBPP) into a mixture of isopentenyl diphosphate (IPP) and dimethylallyl diphosphate (DMAPP). Acts in the terminal step of the DOXP/MEP pathway for isoprenoid precursor biosynthesis. This chain is 4-hydroxy-3-methylbut-2-enyl diphosphate reductase, found in Pelobacter propionicus (strain DSM 2379 / NBRC 103807 / OttBd1).